Reading from the N-terminus, the 187-residue chain is Large ribosomal subunit protein uL6 (187 aa).

This sequence belongs to the universal ribosomal protein uL6 family. Part of the 50S ribosomal subunit.

Functionally, this protein binds to the 23S rRNA, and is important in its secondary structure. It is located near the subunit interface in the base of the L7/L12 stalk, and near the tRNA binding site of the peptidyltransferase center. The chain is Large ribosomal subunit protein uL6 from Thermosynechococcus vestitus (strain NIES-2133 / IAM M-273 / BP-1).